We begin with the raw amino-acid sequence, 475 residues long: Cysteine--tRNA ligase (475 aa).

Position 28 (Cys28) interacts with Zn(2+). The 'HIGH' region motif lies at 30-40 (PTVYDYAHIGN). Residues Cys213, His238, and Glu242 each coordinate Zn(2+). A 'KMSKS' region motif is present at residues 270–274 (KMSKS). Lys273 serves as a coordination point for ATP.

Belongs to the class-I aminoacyl-tRNA synthetase family. As to quaternary structure, monomer. It depends on Zn(2+) as a cofactor.

Its subcellular location is the cytoplasm. It carries out the reaction tRNA(Cys) + L-cysteine + ATP = L-cysteinyl-tRNA(Cys) + AMP + diphosphate. The protein is Cysteine--tRNA ligase (cysS) of Chlamydia muridarum (strain MoPn / Nigg).